The following is a 355-amino-acid chain: Thiamine thiazole synthase, chloroplastic (355 aa).

A chloroplast-targeting transit peptide spans 1–42 (MAAMATTASSLLKTSFAGARLPAAARNPTVSVAPRTGGAICN). Substrate-binding positions include Ala-96, 116–117 (EQ), Gly-124, and Val-189. Cys-218 carries the post-translational modification 2,3-didehydroalanine (Cys). Residues Asp-220, His-235, Met-287, and 297 to 299 (RMG) each bind substrate.

The protein belongs to the THI4 family. In terms of assembly, homooctamer. Requires Fe cation as cofactor. Post-translationally, during the catalytic reaction, a sulfide is transferred from Cys-218 to a reaction intermediate, generating a dehydroalanine residue.

It is found in the plastid. Its subcellular location is the chloroplast. The enzyme catalyses [ADP-thiazole synthase]-L-cysteine + glycine + NAD(+) = [ADP-thiazole synthase]-dehydroalanine + ADP-5-ethyl-4-methylthiazole-2-carboxylate + nicotinamide + 3 H2O + 2 H(+). Its function is as follows. Involved in biosynthesis of the thiamine precursor thiazole. Catalyzes the conversion of NAD and glycine to adenosine diphosphate 5-(2-hydroxyethyl)-4-methylthiazole-2-carboxylic acid (ADT), an adenylated thiazole intermediate. The reaction includes an iron-dependent sulfide transfer from a conserved cysteine residue of the protein to a thiazole intermediate. The enzyme can only undergo a single turnover, which suggests it is a suicide enzyme. May have additional roles in adaptation to various stress conditions and in DNA damage tolerance. Required fot thiamine accumulation and disease resistance toward the bacterial pathogen Xanthomonas oryzae pv oryzae (Xoo) and the fungal pathogen Magnaporthe oryzae. During infection by Xoo, functions positively in the defense pathway initiated by the resistance genes XA3 and XA26 by promoting thiamine synthesis. May function upstream of the defense-related proteins peroxidases, phenylalanine ammonia-lyases and pathogenesis-related proteins. In terms of biological role, (Microbial infection) During infection by Xanthomonas oryzae pv oryzae (Xoo), THI1 interacts with the type III effector virulence factor xadA from Xoo, which is an adhesin-like outer membrane protein. This probably attenuates the function of THI1 in defense response. This chain is Thiamine thiazole synthase, chloroplastic, found in Oryza sativa subsp. japonica (Rice).